Reading from the N-terminus, the 551-residue chain is L-lactate permease (551 aa).

A run of 12 helical transmembrane segments spans residues 13–33 (NIWL…FALI), 37–57 (LKGY…ALLF), 69–89 (VVYG…AAVF), 131–151 (GAAG…GLGF), 159–179 (LCLI…PILV), 194–214 (MVGR…MAIM), 244–264 (FIGP…CLTL), 306–326 (FLFL…ALFA), 366–386 (FDWF…SIVW), 405–425 (LALP…SNYS), 438–458 (TGSA…FLTG), and 530–550 (IFTC…TWMI).

It belongs to the lactate permease family.

Its subcellular location is the cell inner membrane. It carries out the reaction (S)-lactate(in) + H(+)(in) = (S)-lactate(out) + H(+)(out). It catalyses the reaction (R)-lactate(in) + H(+)(in) = (R)-lactate(out) + H(+)(out). The enzyme catalyses glycolate(in) + H(+)(in) = glycolate(out) + H(+)(out). In terms of biological role, uptake of L-lactate across the membrane. Can also transport D-lactate and glycolate. Seems to be driven by a proton motive force. The polypeptide is L-lactate permease (lldP) (Salmonella typhimurium (strain LT2 / SGSC1412 / ATCC 700720)).